A 714-amino-acid polypeptide reads, in one-letter code: Polyribonucleotide nucleotidyltransferase (714 aa).

Residues Asp488 and Asp494 each contribute to the Mg(2+) site. The KH domain maps to 555 to 614; sequence PRIEVMNIPTDKIRDVIGSGGKVIREIVEKTGAKINIEDDGTVKIASSNGKEIEAAKKWI. Residues 624-692 form the S1 motif domain; that stretch reads GEIYEGTVVK…ERGKVRLSMK (69 aa).

It belongs to the polyribonucleotide nucleotidyltransferase family. Requires Mg(2+) as cofactor.

It is found in the cytoplasm. The catalysed reaction is RNA(n+1) + phosphate = RNA(n) + a ribonucleoside 5'-diphosphate. In terms of biological role, involved in mRNA degradation. Catalyzes the phosphorolysis of single-stranded polyribonucleotides processively in the 3'- to 5'-direction. The protein is Polyribonucleotide nucleotidyltransferase of Brucella ovis (strain ATCC 25840 / 63/290 / NCTC 10512).